Reading from the N-terminus, the 1372-residue chain is DNA-directed RNA polymerase subunit beta (1372 aa).

Belongs to the RNA polymerase beta chain family. The RNAP catalytic core consists of 2 alpha, 1 beta, 1 beta' and 1 omega subunit. When a sigma factor is associated with the core the holoenzyme is formed, which can initiate transcription.

The enzyme catalyses RNA(n) + a ribonucleoside 5'-triphosphate = RNA(n+1) + diphosphate. In terms of biological role, DNA-dependent RNA polymerase catalyzes the transcription of DNA into RNA using the four ribonucleoside triphosphates as substrates. This Bradyrhizobium sp. (strain BTAi1 / ATCC BAA-1182) protein is DNA-directed RNA polymerase subunit beta.